Here is a 121-residue protein sequence, read N- to C-terminus: Small ribosomal subunit protein uS13 (121 aa).

A disordered region spans residues Gly94 to Lys121.

The protein belongs to the universal ribosomal protein uS13 family. Part of the 30S ribosomal subunit. Forms a loose heterodimer with protein S19. Forms two bridges to the 50S subunit in the 70S ribosome.

Functionally, located at the top of the head of the 30S subunit, it contacts several helices of the 16S rRNA. In the 70S ribosome it contacts the 23S rRNA (bridge B1a) and protein L5 of the 50S subunit (bridge B1b), connecting the 2 subunits; these bridges are implicated in subunit movement. Contacts the tRNAs in the A and P-sites. This Paraburkholderia phytofirmans (strain DSM 17436 / LMG 22146 / PsJN) (Burkholderia phytofirmans) protein is Small ribosomal subunit protein uS13.